Consider the following 222-residue polypeptide: FCS-Like Zinc finger 13 (222 aa).

The FLZ-type zinc finger occupies 149–192; the sequence is EFLSSCCLCKKKLQGKDIYMYKGEMGFCSAECRSVQIMNDERQE.

Belongs to the FLZ family. Interacts with KIN10 and KIN11 via its FLZ-type zinc finger domain. Interacts with KINB1, KINB2, KINB3 and SNF4 via its N-terminal part.

It localises to the nucleus. The protein resides in the cytoplasm. In terms of biological role, may act as an adapter to facilitate the interaction of SnRK1 complex with effector proteins, conferring tissue- and stimulus-type specific differences in the SnRK1 regulation pathway. In Arabidopsis thaliana (Mouse-ear cress), this protein is FCS-Like Zinc finger 13.